The following is a 306-amino-acid chain: Pantothenate kinase (306 aa).

90-97 (GSVAVGKS) is an ATP binding site.

It belongs to the prokaryotic pantothenate kinase family.

It is found in the cytoplasm. The enzyme catalyses (R)-pantothenate + ATP = (R)-4'-phosphopantothenate + ADP + H(+). The protein operates within cofactor biosynthesis; coenzyme A biosynthesis; CoA from (R)-pantothenate: step 1/5. In Listeria monocytogenes serotype 4b (strain CLIP80459), this protein is Pantothenate kinase.